We begin with the raw amino-acid sequence, 308 residues long: Isochorismatase domain-containing protein 1 (308 aa).

This sequence belongs to the isochorismatase family.

This Xenopus tropicalis (Western clawed frog) protein is Isochorismatase domain-containing protein 1 (isoc1).